A 1087-amino-acid chain; its full sequence is Ubiquitin-associated protein 2-like (1087 aa).

At M1 the chain carries N-acetylmethionine. Residues 1–33 (MMTSVGTNRARGNWEQPQNQNQTQHKQRPQATA) are disordered. In terms of domain architecture, UBA spans 49 to 89 (DFEEKVKQLIDITGKNQDECVIALHDCNGDVNRAINVLLEG). A disordered region spans residues 92–234 (DTHSWEMVGK…TGHFEPDDGT (143 aa)). Residues 118–132 (EEGKENRDRDRDYSR) are compositionally biased toward basic and acidic residues. Residues 133 to 145 (RRGGPPRRGRGAS) are compositionally biased toward basic residues. An asymmetric dimethylarginine mark is found at R187 and R190. The span at 213–226 (NYGNSSGNTWNNTG) shows a compositional bias: low complexity. Residues S356 and S360 each carry the phosphoserine modification. Low complexity predominate over residues 377 to 389 (AQHSQSGSTTTSS). The interval 377 to 420 (AQHSQSGSTTTSSWDMGSTTQSPSLVQYDLKNPSDSAVHSPFTK) is disordered. The segment covering 390 to 401 (WDMGSTTQSPSL) has biased composition (polar residues). Residues S410 and S416 each carry the phosphoserine modification. At T425 the chain carries Phosphothreonine. Phosphoserine occurs at positions 439, 454, 467, 470, 471, and 477. Disordered stretches follow at residues 440 to 493 (PAVA…KKAS), 530 to 656 (SDYE…IPPL), and 669 to 794 (TNQH…LPPG). Composition is skewed to low complexity over residues 474 to 485 (QSSSPQPAQQKL) and 534 to 569 (STPT…SQES). Positions 570-656 (GYQSGPIQST…SPSTSSIPPL (87 aa)) are enriched in polar residues. Phosphoserine is present on residues S604, S605, S608, and S609. Low complexity predominate over residues 688–784 (TTTTQHSSTL…STRSSVATTS (97 aa)). Residues S852 and S859 each carry the phosphoserine modification. The disordered stretch occupies residues 865-901 (FGRGDASSPAPATTLAQPQQNQTQTHHTTQQTFLNPA). A compositionally biased stretch (low complexity) spans 873–896 (PAPATTLAQPQQNQTQTHHTTQQT). S962 and V969 each carry omega-N-methylarginine. 2 positions are modified to N6-acetyllysine: V969 and T976. The interval 1040-1087 (QQPHSQILHHHLQQDGQTGSGQRSQTSSIPQKPQTNKSAYNSYSWGAN) is disordered. Residues 1053–1067 (QDGQTGSGQRSQTSS) are compositionally biased toward low complexity. Residues 1068-1087 (IPQKPQTNKSAYNSYSWGAN) show a composition bias toward polar residues.

In terms of assembly, interacts with BMI1. Part of a complex consisting of UBAP2L, BMI1 and RNF2. Interacts with G3BP1 (via NTF2 domain); promoting stress granule formation. Post-translationally, acetylated. Ubiquitous.

It is found in the nucleus. The protein resides in the chromosome. It localises to the cytoplasm. The protein localises to the stress granule. Recruits the ubiquitination machinery to RNA polymerase II for polyubiquitination, removal and degradation, when the transcription-coupled nucleotide excision repair (TC-NER) machinery fails to resolve DNA damage. Plays an important role in the activity of long-term repopulating hematopoietic stem cells (LT-HSCs). Is a regulator of stress granule assembly, required for their efficient formation. Required for proper brain development and neocortex lamination. In Homo sapiens (Human), this protein is Ubiquitin-associated protein 2-like.